The sequence spans 212 residues: Deoxyribose-phosphate aldolase (212 aa).

D89 (proton donor/acceptor) is an active-site residue. The Schiff-base intermediate with acetaldehyde role is filled by K151. The active-site Proton donor/acceptor is the K180.

Belongs to the DeoC/FbaB aldolase family. DeoC type 1 subfamily.

The protein resides in the cytoplasm. It catalyses the reaction 2-deoxy-D-ribose 5-phosphate = D-glyceraldehyde 3-phosphate + acetaldehyde. It functions in the pathway carbohydrate degradation; 2-deoxy-D-ribose 1-phosphate degradation; D-glyceraldehyde 3-phosphate and acetaldehyde from 2-deoxy-alpha-D-ribose 1-phosphate: step 2/2. In terms of biological role, catalyzes a reversible aldol reaction between acetaldehyde and D-glyceraldehyde 3-phosphate to generate 2-deoxy-D-ribose 5-phosphate. In Clostridium botulinum (strain 657 / Type Ba4), this protein is Deoxyribose-phosphate aldolase.